A 150-amino-acid polypeptide reads, in one-letter code: Protein SLM6 (150 aa).

Topologically, residues 1 to 76 are extracellular; it reads MCSRFSSTSL…SLLRSGVFPS (76 aa). Residues 77–97 form a helical membrane-spanning segment; that stretch reads WLFCMFSSILALAISNSFFFF. The Cytoplasmic portion of the chain corresponds to 98–104; sequence SSNACFS. The chain crosses the membrane as a helical span at residues 105 to 125; the sequence is LLFNSFLVTGFSFSADLLVLA. The Extracellular segment spans residues 126 to 150; the sequence is AAADTLESNVSNDIGGNCATRLFKL.

It localises to the membrane. This Saccharomyces cerevisiae (strain ATCC 204508 / S288c) (Baker's yeast) protein is Protein SLM6.